Here is a 456-residue protein sequence, read N- to C-terminus: ATP-dependent protease ATPase subunit HslU (456 aa).

ATP-binding positions include V18, 60–65 (GVGKTE), D269, E334, and R406.

The protein belongs to the ClpX chaperone family. HslU subfamily. As to quaternary structure, a double ring-shaped homohexamer of HslV is capped on each side by a ring-shaped HslU homohexamer. The assembly of the HslU/HslV complex is dependent on binding of ATP.

The protein localises to the cytoplasm. In terms of biological role, ATPase subunit of a proteasome-like degradation complex; this subunit has chaperone activity. The binding of ATP and its subsequent hydrolysis by HslU are essential for unfolding of protein substrates subsequently hydrolyzed by HslV. HslU recognizes the N-terminal part of its protein substrates and unfolds these before they are guided to HslV for hydrolysis. This chain is ATP-dependent protease ATPase subunit HslU, found in Desulfosudis oleivorans (strain DSM 6200 / JCM 39069 / Hxd3) (Desulfococcus oleovorans).